The sequence spans 620 residues: Chaperone protein DnaK (620 aa).

Thr197 carries the post-translational modification Phosphothreonine; by autocatalysis. The segment at 597 to 620 (AMANKNNAEQPKKKDDDVIDAEVE) is disordered.

The protein belongs to the heat shock protein 70 family.

Functionally, acts as a chaperone. The protein is Chaperone protein DnaK of Helicobacter acinonychis (strain Sheeba).